We begin with the raw amino-acid sequence, 115 residues long: Putative UPF0320 protein YKL225W (115 aa).

It belongs to the UPF0320 family.

The protein is Putative UPF0320 protein YKL225W of Saccharomyces cerevisiae (strain ATCC 204508 / S288c) (Baker's yeast).